We begin with the raw amino-acid sequence, 619 residues long: Laccase (619 aa).

An N-terminal signal peptide occupies residues 1 to 21 (MKFLGIAALVAGLLAPSLVLG). A propeptide spanning residues 22 to 49 (APAPGTEGVNLLTPVDKRQDSQAERYGG) is cleaved from the precursor. Cys55 and Cys63 are joined by a disulfide. 2 Plastocyanin-like domains span residues 84-207 (TRRY…IVIN) and 216-373 (VDLG…LPTN). The N-linked (GlcNAc...) asparagine glycan is linked to Asn139. Positions 144, 146, 189, and 191 each coordinate Cu cation. 2 cysteine pairs are disulfide-bonded: Cys165-Cys586 and Cys349-Cys383. Asn282, Asn295, and Asn340 each carry an N-linked (GlcNAc...) asparagine glycan. Asn422 and Asn444 each carry an N-linked (GlcNAc...) asparagine glycan. A Plastocyanin-like 3 domain is found at 431-566 (NKPVLEYVLT…GGLSNQFLER (136 aa)). Positions 477, 480, 482, 548, 549, 550, and 554 each coordinate Cu cation. The propeptide occupies 607-619 (RSGVKAREVKMKW).

Belongs to the multicopper oxidase family. Cu cation is required as a cofactor.

The protein localises to the secreted. The catalysed reaction is 4 hydroquinone + O2 = 4 benzosemiquinone + 2 H2O. In terms of biological role, lignin degradation and detoxification of lignin-derived products. The polypeptide is Laccase (lacc) (Neurospora crassa (strain ATCC 24698 / 74-OR23-1A / CBS 708.71 / DSM 1257 / FGSC 987)).